The sequence spans 828 residues: DNA gyrase subunit A (828 aa).

The Topo IIA-type catalytic domain occupies 32–497; sequence LPDVRDGLKP…EVLSLEDEDL (466 aa). Catalysis depends on Tyr-120, which acts as the O-(5'-phospho-DNA)-tyrosine intermediate. Residues 524–530 carry the GyrA-box motif; that stretch reads QKRGGRG.

It belongs to the type II topoisomerase GyrA/ParC subunit family. In terms of assembly, heterotetramer, composed of two GyrA and two GyrB chains. In the heterotetramer, GyrA contains the active site tyrosine that forms a transient covalent intermediate with DNA, while GyrB binds cofactors and catalyzes ATP hydrolysis.

Its subcellular location is the cytoplasm. It carries out the reaction ATP-dependent breakage, passage and rejoining of double-stranded DNA.. In terms of biological role, a type II topoisomerase that negatively supercoils closed circular double-stranded (ds) DNA in an ATP-dependent manner to modulate DNA topology and maintain chromosomes in an underwound state. Negative supercoiling favors strand separation, and DNA replication, transcription, recombination and repair, all of which involve strand separation. Also able to catalyze the interconversion of other topological isomers of dsDNA rings, including catenanes and knotted rings. Type II topoisomerases break and join 2 DNA strands simultaneously in an ATP-dependent manner. The protein is DNA gyrase subunit A of Streptococcus pyogenes serotype M6 (strain ATCC BAA-946 / MGAS10394).